Consider the following 267-residue polypeptide: Transcription factor Spi-B (267 aa).

Residues 1 to 31 (MLALEAAQLDGPHLSCLYPEGVFYDLDSCKP) form a TAD1 (Acidic) region. Positions 41–62 (LDSTWGWTEAPPAPAIAPYEAF) are TAD2. Positions 174–257 (LRLYQFLLGL…VKRKLTYQFD (84 aa)) form a DNA-binding region, ETS.

The protein belongs to the ETS family. Can form homotypic interactions. Interacts with IRF4/Pip. Interacts with JUN. Interacts with TBP. May also interact with CREBBP and EP300. Interacts with NONO/p54(nrb). As to expression, expressed in the medulla of the thymus, the spleen and germinal centers of the lymph nodes. Expressed in B-cells and T-cells, expression increases during B-cell maturation and decreases during T-cell maturation.

The protein resides in the nucleus. Functionally, sequence specific transcriptional activator which binds to the PU-box, a purine-rich DNA sequence (5'-GAGGAA-3') that can act as a lymphoid-specific enhancer. Promotes development of plasmacytoid dendritic cells (pDCs), also known as type 2 DC precursors (pre-DC2) or natural interferon (IFN)-producing cells. These cells have the capacity to produce large amounts of interferon and block viral replication. Required for B-cell receptor (BCR) signaling, which is necessary for normal B-cell development and antigenic stimulation. In Mus musculus (Mouse), this protein is Transcription factor Spi-B (Spib).